Consider the following 505-residue polypeptide: Phosphoethanolamine N-methyltransferase (505 aa).

Residues Gly-76, Arg-81, Asp-97, Asp-122, Val-123, and Asn-141 each coordinate S-adenosyl-L-homocysteine. Residues Ser-174, Ser-179, Gly-180, Arg-184, and Tyr-191 each contribute to the phosphocholine site. N-methylethanolamine phosphate contacts are provided by residues 260–261 and Tyr-269; that span reads QY. Tyr-269 lines the phosphocholine pocket. Positions 278, 279, 305, 327, 353, 354, and 370 each coordinate S-adenosyl-L-homocysteine. Tyr-401, Tyr-415, Arg-419, Tyr-421, and Lys-487 together coordinate phosphocholine. Residues Tyr-401, Tyr-415, 419–421, and Lys-487 contribute to the N-methylethanolamine phosphate site; that span reads RGY.

This sequence belongs to the class I-like SAM-binding methyltransferase superfamily. PEAMT family.

The catalysed reaction is phosphoethanolamine + S-adenosyl-L-methionine = N-methylethanolamine phosphate + S-adenosyl-L-homocysteine + H(+). The enzyme catalyses N-methylethanolamine phosphate + S-adenosyl-L-methionine = N,N-dimethylethanolamine phosphate + S-adenosyl-L-homocysteine + H(+). It carries out the reaction N,N-dimethylethanolamine phosphate + S-adenosyl-L-methionine = phosphocholine + S-adenosyl-L-homocysteine + H(+). It functions in the pathway phospholipid metabolism; phosphatidylcholine biosynthesis; phosphocholine from phosphoethanolamine: step 1/1. With respect to regulation, inhibited by phosphatidic acid. Functionally, involved in phosphocholine biosynthesis. Catalyzes the N-methylation of phosphoethanolamine, phosphomonomethylethanolamine and phosphodimethylethanolamine, the three methylation steps required to convert phosphoethanolamine to phosphocholine (PC). This chain is Phosphoethanolamine N-methyltransferase, found in Triticum aestivum (Wheat).